A 515-amino-acid polypeptide reads, in one-letter code: tRNA pseudouridine synthase Pus10 (515 aa).

Zn(2+)-binding residues include C21 and C24. The stretch at 42 to 85 (KEVTYELQKYLSHGDPAEENDTPPSKKAKIEEDTSSNEHLGNCE) forms a coiled coil. A disordered region spans residues 55-82 (GDPAEENDTPPSKKAKIEEDTSSNEHLG). Zn(2+) contacts are provided by C96 and C99. An RNA binding forefinger loop region spans residues 291-304 (TPWIIDGERKIESS). D331 acts as the Nucleophile in catalysis. An RNA binding thumb loop region spans residues 428–443 (QKTPLRVLHRRPLASR).

The protein belongs to the pseudouridine synthase Pus10 family.

The protein resides in the nucleus. The protein localises to the cytoplasm. Its subcellular location is the mitochondrion. It catalyses the reaction uridine(55) in tRNA = pseudouridine(55) in tRNA. The enzyme catalyses uridine(54) in tRNA = pseudouridine(54) in tRNA. Its function is as follows. Protein with different functions depending on its subcellular location: involved in miRNA processing in the nucleus and acts as a tRNA pseudouridylate synthase in the cytoplasm. In the cytoplasm, acts as a pseudouridylate synthase by catalyzing synthesis of pseudouridine(54) and pseudouridine(55) from uracil-54 and uracil-55, respectively, in the psi GC loop of a subset of tRNAs. tRNA pseudouridylate synthase activity is enhanced by the presence of 1-methyladenosine at position 53-61 of tRNAs. Does not show tRNA pseudouridylate synthase activity in the nucleus. In the nucleus, promotes primary microRNAs (pri-miRNAs) processing independently of its RNA pseudouridylate synthase activity. Binds pri-miRNAs. The polypeptide is tRNA pseudouridine synthase Pus10 (Xenopus laevis (African clawed frog)).